Consider the following 46-residue polypeptide: Photosystem II reaction center protein K (46 aa).

A propeptide spanning residues 1-9 (MIDALVLVA) is cleaved from the precursor. Over 10–19 (KLPEAYAIFD) the chain is Lumenal. The chain crosses the membrane as a helical span at residues 20–39 (PLVDVLPVIPVLFLALAFVW). The Cytoplasmic segment spans residues 40–46 (QAAVGFR).

Belongs to the PsbK family. As to quaternary structure, PSII is composed of 1 copy each of membrane proteins PsbA, PsbB, PsbC, PsbD, PsbE, PsbF, PsbH, PsbI, PsbJ, PsbK, PsbL, PsbM, PsbT, PsbX, PsbY, PsbZ, Psb30/Ycf12, peripheral proteins PsbO, CyanoQ(PsbQ), PsbU, PsbV and a large number of cofactors. It forms dimeric complexes. Part of a photosystem II (PSII) assembly intermediate complex PSII-I; crystallized from a strain deleted of psbJ, it forms monomeric PSII before addition of the oxygen evolving complex. PSII-I includes 3 assembly factors not found in mature PSII (Psb27, Psb28 and Psb34). PSII binds multiple chlorophylls, carotenoids and specific lipids. is required as a cofactor.

It is found in the cellular thylakoid membrane. Functionally, one of the components of the core complex of photosystem II (PSII). PSII is a light-driven water:plastoquinone oxidoreductase that uses light energy to abstract electrons from H(2)O, generating O(2) and a proton gradient subsequently used for ATP formation. It consists of a core antenna complex that captures photons, and an electron transfer chain that converts photonic excitation into a charge separation. Required for association of PsbZ and Psb30/Ycf12 with PSII. In Thermosynechococcus vestitus (strain NIES-2133 / IAM M-273 / BP-1), this protein is Photosystem II reaction center protein K.